A 293-amino-acid polypeptide reads, in one-letter code: uncharacterized protein (293 aa).

This sequence to M.jannaschii MJ1614 and MJ0008.

This is an uncharacterized protein from Methanocaldococcus jannaschii (strain ATCC 43067 / DSM 2661 / JAL-1 / JCM 10045 / NBRC 100440) (Methanococcus jannaschii).